A 361-amino-acid polypeptide reads, in one-letter code: MIPFPTERLDAILARHDIVTAQLASGEIDPETVVQLSRELSDLDPVVAAIRAYRAALENLAGVEALIDEPGTDPEMRALAAEEKPEALAALETAHRALQLLLLPKDAADEKSAILEVRAGTGGDEAALFAGDLFRMYAKYAESKGWRVEVISESEGTVGGFREVVAEVKGRGVFARLKFESGAHRVQRVPDTETQGRIHTSAATVAVLPEAEEVDIHVNDADLKIDTMRAQGAGGQHVNKTESAIRITHLPTGIVVFVQEERSQHKNRARAMALLRARLYEAERNAKDSARAADRKAQVGSGDRSERIRTYNFPQGRVTDHRINLTLYKLEEVMAGTALDEVVDALITEHQAELLAAEGMA.

Glutamine 236 is subject to N5-methylglutamine. Over residues 285 to 309 (NAKDSARAADRKAQVGSGDRSERIR) the composition is skewed to basic and acidic residues. The segment at 285–312 (NAKDSARAADRKAQVGSGDRSERIRTYN) is disordered.

This sequence belongs to the prokaryotic/mitochondrial release factor family. In terms of processing, methylated by PrmC. Methylation increases the termination efficiency of RF1.

Its subcellular location is the cytoplasm. Peptide chain release factor 1 directs the termination of translation in response to the peptide chain termination codons UAG and UAA. This Methylobacterium radiotolerans (strain ATCC 27329 / DSM 1819 / JCM 2831 / NBRC 15690 / NCIMB 10815 / 0-1) protein is Peptide chain release factor 1.